The primary structure comprises 212 residues: MSKLDEQLIALGAVFEAATLVDRIARTGQVPNAALGCMLGSLLARNPQTTLEIYGGDDLNLRDGYRALVGALERDSSSLQREPLRYALAMIGLERQLDKRGDMLQVIGSRLDQIQQQVEHFGLTHENVVASFGGLYQDTLSTFRQRIQVQGDMRHLQQSDNAAKIRALLLSGIRSARLWRQLGGHRWQLIFSRRKLLDALYPRLRSTQSEDR.

This sequence belongs to the HflD family.

The protein resides in the cytoplasm. It localises to the cell inner membrane. The chain is High frequency lysogenization protein HflD homolog from Stutzerimonas stutzeri (strain A1501) (Pseudomonas stutzeri).